The primary structure comprises 249 residues: Flagellar brake protein YcgR (249 aa).

The PilZ domain maps to 117–236 (QRREFFRVDA…ERELQQVIFS (120 aa)).

The protein belongs to the YcgR family. Monomer. Interacts with the flagellar basal bodies.

The protein localises to the bacterial flagellum basal body. In terms of biological role, acts as a flagellar brake, regulating swimming and swarming in a bis-(3'-5') cyclic diguanylic acid (c-di-GMP)-dependent manner. Binds 1 c-di-GMP dimer per subunit. Increasing levels of c-di-GMP lead to decreased motility. In Erwinia tasmaniensis (strain DSM 17950 / CFBP 7177 / CIP 109463 / NCPPB 4357 / Et1/99), this protein is Flagellar brake protein YcgR.